The primary structure comprises 492 residues: Fascin-2 (492 aa).

Belongs to the fascin family. As to expression, expressed in the inner ear. Abundant in the utricle.

The protein resides in the cytoplasm. It is found in the cytoskeleton. It localises to the cell projection. The protein localises to the stereocilium. Its function is as follows. Acts as an actin bundling protein. May play a pivotal role in photoreceptor cell-specific events, such as disk morphogenesis. Important for maintaining functional hair-cell bundles in the inner ear. May stiffen the longer stereocilia of hair-cell bundles in the inner ear enabling better force transmission to tip links. The sequence is that of Fascin-2 (Fscn2) from Mus musculus (Mouse).